A 415-amino-acid polypeptide reads, in one-letter code: MKSDSEGHKSSSKIQIHKGKILLKPRSWVNLGYSIANSEKETFFLKNAIPGETVDTVLLKRSGSLFWGVASEIQEVSSERISSDCSIFPRCGGCSYRHVSYQKELEIKKFLLQETLEHFLSKKHIQIPEIEILSGDPNGYRNTAQIQLGFAGNQRLAGFYEEFSHSIVNLPEEGCKNLPQEMNFAFAEFLKQEVKGSKQILKSKTLSFRLEGTKVISYKKKSVSFSENIRIPELKKIVWEIPAGGFSQVNRYLIAPWLEKIFELVPNNQNRILELYCGSGLIAIALKSKTTSWLGYEISSDCVQQAKRNVLLNGISSCDFKTLNLETDWIDSEEVLNSSFWIMNPPRAGLSKKVLQTLIKTSPNGFLYSSCNHSTLVRDLSLFLNKDYKLSNVTLVDFFPRTKHFEVIVKVEKKD.

[4Fe-4S] cluster-binding residues include cysteine 85, cysteine 91, cysteine 94, and cysteine 175. S-adenosyl-L-methionine contacts are provided by glutamine 248, tyrosine 276, glutamate 297, and asparagine 344. The active-site Nucleophile is cysteine 371.

Belongs to the class I-like SAM-binding methyltransferase superfamily. RNA M5U methyltransferase family.

This is an uncharacterized protein from Leptospira interrogans serogroup Icterohaemorrhagiae serovar copenhageni (strain Fiocruz L1-130).